A 352-amino-acid chain; its full sequence is 3-isopropylmalate dehydrogenase (352 aa).

Positions 96, 106, 134, and 220 each coordinate substrate. Residues Asp-220, Asp-244, and Asp-248 each contribute to the Mg(2+) site. NAD(+) is bound at residue 277-289; the sequence is GSAPDIAGKNLAN.

The protein belongs to the isocitrate and isopropylmalate dehydrogenases family. LeuB type 1 subfamily. Homodimer. Requires Mg(2+) as cofactor. Mn(2+) is required as a cofactor.

It localises to the cytoplasm. It carries out the reaction (2R,3S)-3-isopropylmalate + NAD(+) = 4-methyl-2-oxopentanoate + CO2 + NADH. It functions in the pathway amino-acid biosynthesis; L-leucine biosynthesis; L-leucine from 3-methyl-2-oxobutanoate: step 3/4. Its function is as follows. Catalyzes the oxidation of 3-carboxy-2-hydroxy-4-methylpentanoate (3-isopropylmalate) to 3-carboxy-4-methyl-2-oxopentanoate. The product decarboxylates to 4-methyl-2 oxopentanoate. In Desulfitobacterium hafniense (strain Y51), this protein is 3-isopropylmalate dehydrogenase.